Consider the following 255-residue polypeptide: MKFGIISIFPEMFKAINDFGITARAIKDSKVSIKCFNPRDYTTDKHATVDDTSFGGGAGMVMKYEPLSQAIKDAKSTLGYNTKVVYLSPQGSVFNHNKALELLENDSLILLCGRYEGVDERLIQDYVDEEISVGDFVLSGGELPAMLVMDSLIRLLPEVLGNKDSMIEDSFYDGLLDYPHYTKPAVLPDGNAVPSVLLSGNHKEIAKWRRKQKLIRTYERRKDLIECLCLSEEDKRIINDYKIDKVSTKGEKNEK.

S-adenosyl-L-methionine is bound by residues Gly-113 and 133-138 (VGDFVL).

It belongs to the RNA methyltransferase TrmD family. Homodimer.

It is found in the cytoplasm. The catalysed reaction is guanosine(37) in tRNA + S-adenosyl-L-methionine = N(1)-methylguanosine(37) in tRNA + S-adenosyl-L-homocysteine + H(+). Functionally, specifically methylates guanosine-37 in various tRNAs. The protein is tRNA (guanine-N(1)-)-methyltransferase of Francisella philomiragia subsp. philomiragia (strain ATCC 25017 / CCUG 19701 / FSC 153 / O#319-036).